The sequence spans 321 residues: NADPH-dependent codeinone reductase 1-3 (321 aa).

Residues Thr27 and Asp51 each contribute to the NADPH site. Residues Tyr56 and His119 each act as proton donor in the active site. His119 lines the substrate pocket. The NADPH site is built by Gln187, Ser214, Leu216, Ser264, and Arg269. Residues 300–321 (ADFLLSPTGPFKTEEEFWDEKD) form a disordered region.

The protein belongs to the aldo/keto reductase family. As to expression, latex secreting cells (laticifer cells). Expressed constitutively in all organs with highest levels in capsules. Restricted to the parietal region of sieve elements adjacent or proximal to laticifers in roots, stems, leaves and carpels.

The protein localises to the cytoplasm. The protein resides in the cytosol. The enzyme catalyses codeine + NADP(+) = codeinone + NADPH + H(+). It carries out the reaction neopine + NADP(+) = neopinone + NADPH + H(+). It catalyses the reaction morphine + NADP(+) = morphinone + NADPH + H(+). The catalysed reaction is neomorphine + NADP(+) = neomorphinone + NADPH + H(+). It functions in the pathway alkaloid biosynthesis; morphine biosynthesis. Functionally, NADPH-dependent codeinone reductase involved in biosynthesis of morphinan-type benzylisoquinoline and opiate alkaloids natural products. Reduces codeinone to codeine in the penultimate step in morphine biosynthesis. Can use morphinone, hydrocodone and hydromorphone as substrate during reductive reaction with NADPH as cofactor, and morphine and dihydrocodeine as substrate during oxidative reaction with NADP as cofactor. Converts morphinone to morphine, and neomorphinone to neomorphine. Reduces irreversibly neopinone, a spontaneous isomer of codeinone, to neopine; in planta, neopine levels are limited to low levels. The chain is NADPH-dependent codeinone reductase 1-3 from Papaver somniferum (Opium poppy).